Consider the following 474-residue polypeptide: ATP synthase subunit beta 2 (474 aa).

Residue 151-158 (GGAGVGKT) participates in ATP binding.

This sequence belongs to the ATPase alpha/beta chains family. As to quaternary structure, F-type ATPases have 2 components, CF(1) - the catalytic core - and CF(0) - the membrane proton channel. CF(1) has five subunits: alpha(3), beta(3), gamma(1), delta(1), epsilon(1). CF(0) has four main subunits: a(1), b(1), b'(1) and c(9-12).

It localises to the cell inner membrane. It carries out the reaction ATP + H2O + 4 H(+)(in) = ADP + phosphate + 5 H(+)(out). In terms of biological role, produces ATP from ADP in the presence of a proton gradient across the membrane. The catalytic sites are hosted primarily by the beta subunits. This is ATP synthase subunit beta 2 from Dinoroseobacter shibae (strain DSM 16493 / NCIMB 14021 / DFL 12).